The following is a 248-amino-acid chain: Small ribosomal subunit protein uS3 (248 aa).

A KH type-2 domain is found at 39 to 111 (IRKYLNKVYK…EIVFNVVEVK (73 aa)). Residues 222–248 (KPFEASAPRPQRRNRKEANNYVNAKKN) are disordered.

It belongs to the universal ribosomal protein uS3 family. In terms of assembly, part of the 30S ribosomal subunit. Forms a tight complex with proteins S10 and S14.

Functionally, binds the lower part of the 30S subunit head. Binds mRNA in the 70S ribosome, positioning it for translation. The polypeptide is Small ribosomal subunit protein uS3 (Alteracholeplasma palmae (strain ATCC 49389 / J233) (Acholeplasma palmae)).